The sequence spans 345 residues: Uroporphyrinogen decarboxylase (345 aa).

Residues 27–31 (RQAGR), phenylalanine 46, aspartate 76, tyrosine 152, serine 207, and histidine 320 contribute to the substrate site.

Belongs to the uroporphyrinogen decarboxylase family. Homodimer.

The protein localises to the cytoplasm. It catalyses the reaction uroporphyrinogen III + 4 H(+) = coproporphyrinogen III + 4 CO2. It functions in the pathway porphyrin-containing compound metabolism; protoporphyrin-IX biosynthesis; coproporphyrinogen-III from 5-aminolevulinate: step 4/4. In terms of biological role, catalyzes the decarboxylation of four acetate groups of uroporphyrinogen-III to yield coproporphyrinogen-III. This chain is Uroporphyrinogen decarboxylase, found in Geobacillus sp. (strain WCH70).